Here is a 214-residue protein sequence, read N- to C-terminus: Large ribosomal subunit protein uL16 (214 aa).

This sequence belongs to the universal ribosomal protein uL16 family. As to quaternary structure, component of the large ribosomal subunit. Mature ribosomes consist of a small (40S) and a large (60S) subunit. The 40S subunit contains about 33 different proteins and 1 molecule of RNA (18S). The 60S subunit contains about 49 different proteins and 3 molecules of RNA (28S, 5.8S and 5S).

In Caenorhabditis elegans, this protein is Large ribosomal subunit protein uL16 (rpl-10L).